Consider the following 301-residue polypeptide: D-alanine--D-alanine ligase (301 aa).

One can recognise an ATP-grasp domain in the interval 99-294 (KSVLEANGIR…FSELIDMIIQ (196 aa)). Residue 126–181 (INELGYPVVVKPTHGGSSVATFIVKEEKEIENCVSEAFKWDSEVMIEKFIKGDEIT) coordinates ATP. Residues Asp248, Glu261, and Asn263 each coordinate Mg(2+).

This sequence belongs to the D-alanine--D-alanine ligase family. The cofactor is Mg(2+). Requires Mn(2+) as cofactor.

It localises to the cytoplasm. The enzyme catalyses 2 D-alanine + ATP = D-alanyl-D-alanine + ADP + phosphate + H(+). It participates in cell wall biogenesis; peptidoglycan biosynthesis. In terms of biological role, cell wall formation. This chain is D-alanine--D-alanine ligase, found in Clostridium beijerinckii (strain ATCC 51743 / NCIMB 8052) (Clostridium acetobutylicum).